Here is a 510-residue protein sequence, read N- to C-terminus: ATP synthase subunit alpha (510 aa).

169–176 (GDRQTGKT) serves as a coordination point for ATP.

This sequence belongs to the ATPase alpha/beta chains family. In terms of assembly, F-type ATPases have 2 components, CF(1) - the catalytic core - and CF(0) - the membrane proton channel. CF(1) has five subunits: alpha(3), beta(3), gamma(1), delta(1), epsilon(1). CF(0) has three main subunits: a(1), b(2) and c(9-12). The alpha and beta chains form an alternating ring which encloses part of the gamma chain. CF(1) is attached to CF(0) by a central stalk formed by the gamma and epsilon chains, while a peripheral stalk is formed by the delta and b chains.

It localises to the cell inner membrane. The catalysed reaction is ATP + H2O + 4 H(+)(in) = ADP + phosphate + 5 H(+)(out). Produces ATP from ADP in the presence of a proton gradient across the membrane. The alpha chain is a regulatory subunit. In Nitrobacter hamburgensis (strain DSM 10229 / NCIMB 13809 / X14), this protein is ATP synthase subunit alpha.